A 380-amino-acid chain; its full sequence is Queuine tRNA-ribosyltransferase (380 aa).

Aspartate 95 serves as the catalytic Proton acceptor. Substrate contacts are provided by residues 95–99 (DSGGF), aspartate 149, glutamine 192, and glycine 219. The interval 250–256 (GVGSPDA) is RNA binding. Aspartate 269 acts as the Nucleophile in catalysis. Positions 274 to 278 (TRIAR) are RNA binding; important for wobble base 34 recognition. Zn(2+)-binding residues include cysteine 307, cysteine 309, cysteine 312, and histidine 338.

This sequence belongs to the queuine tRNA-ribosyltransferase family. As to quaternary structure, homodimer. Within each dimer, one monomer is responsible for RNA recognition and catalysis, while the other monomer binds to the replacement base PreQ1. The cofactor is Zn(2+).

The enzyme catalyses 7-aminomethyl-7-carbaguanine + guanosine(34) in tRNA = 7-aminomethyl-7-carbaguanosine(34) in tRNA + guanine. It participates in tRNA modification; tRNA-queuosine biosynthesis. Catalyzes the base-exchange of a guanine (G) residue with the queuine precursor 7-aminomethyl-7-deazaguanine (PreQ1) at position 34 (anticodon wobble position) in tRNAs with GU(N) anticodons (tRNA-Asp, -Asn, -His and -Tyr). Catalysis occurs through a double-displacement mechanism. The nucleophile active site attacks the C1' of nucleotide 34 to detach the guanine base from the RNA, forming a covalent enzyme-RNA intermediate. The proton acceptor active site deprotonates the incoming PreQ1, allowing a nucleophilic attack on the C1' of the ribose to form the product. After dissociation, two additional enzymatic reactions on the tRNA convert PreQ1 to queuine (Q), resulting in the hypermodified nucleoside queuosine (7-(((4,5-cis-dihydroxy-2-cyclopenten-1-yl)amino)methyl)-7-deazaguanosine). This Pediococcus pentosaceus (strain ATCC 25745 / CCUG 21536 / LMG 10740 / 183-1w) protein is Queuine tRNA-ribosyltransferase.